The sequence spans 182 residues: Large ribosomal subunit protein uL16 (182 aa).

Belongs to the universal ribosomal protein uL16 family.

This is Large ribosomal subunit protein uL16 from Pyrobaculum arsenaticum (strain DSM 13514 / JCM 11321 / PZ6).